A 637-amino-acid chain; its full sequence is Probable ATP-binding protein YheS (637 aa).

ABC transporter domains lie at 2–246 and 313–527; these read IVFS…AQQQ and LKME…KQEN. Residues 34–41 and 345–352 contribute to the ATP site; these read GKNGCGKS and GRNGAGKS. A disordered region spans residues 523–559; it reads QKQENQTDEAPKENANSAQARKDQKRREAELRAQTQP. Basic and acidic residues predominate over residues 542 to 553; it reads ARKDQKRREAEL.

The protein belongs to the ABC transporter superfamily. ABCF family. YheS subfamily.

In terms of biological role, genetic data indicate it may be involved in ribosome assembly or function. This chain is Probable ATP-binding protein YheS (yheS), found in Escherichia coli O157:H7.